The sequence spans 92 residues: MALLAGSLLGPTSRSAALLGGRWLQPRAWLGFPDAWGLPTPQQARGKSRGNEYQPSNIKRKNKHGWVRRLSTPAGVQVILRRMLKGRKSLSH.

Residues 1-46 constitute a mitochondrion transit peptide; the sequence is MALLAGSLLGPTSRSAALLGGRWLQPRAWLGFPDAWGLPTPQQARG. A compositionally biased stretch (polar residues) spans 40-57; that stretch reads TPQQARGKSRGNEYQPSN. Residues 40-63 are disordered; the sequence is TPQQARGKSRGNEYQPSNIKRKNK. Position 71 is a phosphoserine (S71).

It belongs to the bacterial ribosomal protein bL34 family. As to quaternary structure, component of the mitochondrial ribosome large subunit (39S) which comprises a 16S rRNA and about 50 distinct proteins.

Its subcellular location is the mitochondrion. This chain is Large ribosomal subunit protein bL34m (MRPL34), found in Macaca fascicularis (Crab-eating macaque).